Consider the following 446-residue polypeptide: Tubulin beta-1 chain (446 aa).

Positions 13, 71, 140, 144, 145, 146, 206, and 228 each coordinate GTP. E71 is a Mg(2+) binding site. Residues 421–446 are disordered; that stretch reads VSEYQQYQDASADDGEEYEEDAPMEE. The segment covering 431 to 446 has biased composition (acidic residues); sequence SADDGEEYEEDAPMEE.

The protein belongs to the tubulin family. In terms of assembly, dimer of alpha and beta chains. A typical microtubule is a hollow water-filled tube with an outer diameter of 25 nm and an inner diameter of 15 nM. Alpha-beta heterodimers associate head-to-tail to form protofilaments running lengthwise along the microtubule wall with the beta-tubulin subunit facing the microtubule plus end conferring a structural polarity. Microtubules usually have 13 protofilaments but different protofilament numbers can be found in some organisms and specialized cells. Mg(2+) is required as a cofactor.

The protein localises to the cytoplasm. It localises to the cytoskeleton. Its function is as follows. Tubulin is the major constituent of microtubules, a cylinder consisting of laterally associated linear protofilaments composed of alpha- and beta-tubulin heterodimers. Microtubules grow by the addition of GTP-tubulin dimers to the microtubule end, where a stabilizing cap forms. Below the cap, tubulin dimers are in GDP-bound state, owing to GTPase activity of alpha-tubulin. This chain is Tubulin beta-1 chain (tub1), found in Hypocrea rufa (Trichoderma viride).